The sequence spans 649 residues: Replication protein E1 (649 aa).

A Nuclear localization signal motif is present at residues K83–K85. Phosphoserine; by host is present on residues S89, S93, and S107. The Nuclear export signal signature appears at I106–L115. Positions G138–R169 are disordered. Positions R187–D353 are DNA-binding region. The SF3 helicase domain occupies I452–V602. G478–S485 provides a ligand contact to ATP. A Glycyl lysine isopeptide (Lys-Gly) (interchain with G-Cter in SUMO) cross-link involves residue K559.

Belongs to the papillomaviridae E1 protein family. As to quaternary structure, can form hexamers. Interacts with E2 protein; this interaction increases E1 DNA binding specificity. Interacts with host DNA polymerase subunit POLA2. Interacts with host single stranded DNA-binding protein RPA1. Interacts with host TOP1; this interaction stimulates the enzymatic activity of TOP1. Phosphorylated. Post-translationally, sumoylated.

The protein localises to the host nucleus. It catalyses the reaction Couples ATP hydrolysis with the unwinding of duplex DNA by translocating in the 3'-5' direction.. The catalysed reaction is ATP + H2O = ADP + phosphate + H(+). Functionally, ATP-dependent DNA 3'-5' helicase required for initiation of viral DNA replication. It forms a complex with the viral E2 protein. The E1-E2 complex binds to the replication origin which contains binding sites for both proteins. During the initial step, a dimer of E1 interacts with a dimer of protein E2 leading to a complex that binds the viral origin of replication with high specificity. Then, a second dimer of E1 displaces the E2 dimer in an ATP-dependent manner to form the E1 tetramer. Following this, two E1 monomers are added to each half of the site, which results in the formation of two E1 trimers on the viral ori. Subsequently, two hexamers will be created. The double hexamer acts as a bi-directional helicase machinery and unwinds the viral DNA and then recruits the host DNA polymerase to start replication. This Homo sapiens (Human) protein is Replication protein E1.